We begin with the raw amino-acid sequence, 610 residues long: Alpha-fetoprotein (610 aa).

A signal peptide spans 1–18 (MKWVVSFFLLFLLNFSDS). 3 Albumin domains span residues 19–210 (RTMH…TSIT), 211–403 (KELR…EELE), and 404–602 (KYIQ…ALIS). A Cu(2+)-binding site is contributed by His-22. Disulfide bonds link Cys-99-Cys-114, Cys-113-Cys-124, Cys-148-Cys-193, Cys-192-Cys-201, Cys-224-Cys-270, Cys-269-Cys-277, Cys-289-Cys-303, and Cys-302-Cys-314. Phosphoserine is present on residues Ser-111 and Ser-115. N-linked (GlcNAc...) asparagine glycans are attached at residues Asn-197 and Asn-251. Phosphoserine is present on Ser-345. 7 cysteine pairs are disulfide-bonded: Cys-385-Cys-394, Cys-417-Cys-463, Cys-462-Cys-473, Cys-486-Cys-502, Cys-501-Cys-512, Cys-539-Cys-584, and Cys-583-Cys-592. Position 445 is a phosphoserine (Ser-445).

The protein belongs to the ALB/AFP/VDB family. As to quaternary structure, dimeric and trimeric forms have been found in addition to the monomeric form. In terms of processing, sulfated. In terms of tissue distribution, plasma.

The protein resides in the secreted. Functionally, binds copper, nickel, and fatty acids as well as, and bilirubin less well than, serum albumin. This Bos taurus (Bovine) protein is Alpha-fetoprotein (AFP).